A 354-amino-acid chain; its full sequence is Type II restriction enzyme BanI (354 aa).

Homodimer.

The catalysed reaction is Endonucleolytic cleavage of DNA to give specific double-stranded fragments with terminal 5'-phosphates.. Its function is as follows. A P subtype restriction enzyme that recognizes the double-stranded sequence 5'-GGYRCC-3' and cleaves after G-1. The polypeptide is Type II restriction enzyme BanI (banIR) (Aneurinibacillus aneurinilyticus (Bacillus aneurinolyticus)).